The following is a 160-amino-acid chain: Transcription elongation factor GreA (160 aa).

Residues 1–72 are a coiled coil; sequence MAEKTYVMTL…QIQILETKIR (72 aa).

It belongs to the GreA/GreB family.

In terms of biological role, necessary for efficient RNA polymerase transcription elongation past template-encoded arresting sites. The arresting sites in DNA have the property of trapping a certain fraction of elongating RNA polymerases that pass through, resulting in locked ternary complexes. Cleavage of the nascent transcript by cleavage factors such as GreA or GreB allows the resumption of elongation from the new 3'terminus. GreA releases sequences of 2 to 3 nucleotides. The chain is Transcription elongation factor GreA from Streptococcus thermophilus (strain CNRZ 1066).